Consider the following 172-residue polypeptide: Large ribosomal subunit protein uL5 (172 aa).

The protein belongs to the universal ribosomal protein uL5 family. In terms of assembly, component of the large ribosomal subunit.

It is found in the nucleus. It localises to the cytoplasm. Functionally, component of the ribosome, a large ribonucleoprotein complex responsible for the synthesis of proteins in the cell. The small ribosomal subunit (SSU) binds messenger RNAs (mRNAs) and translates the encoded message by selecting cognate aminoacyl-transfer RNA (tRNA) molecules. The large subunit (LSU) contains the ribosomal catalytic site termed the peptidyl transferase center (PTC), which catalyzes the formation of peptide bonds, thereby polymerizing the amino acids delivered by tRNAs into a polypeptide chain. The nascent polypeptides leave the ribosome through a tunnel in the LSU and interact with protein factors that function in enzymatic processing, targeting, and the membrane insertion of nascent chains at the exit of the ribosomal tunnel. The chain is Large ribosomal subunit protein uL5 (RPL11) from Tetrahymena thermophila.